The chain runs to 215 residues: Phosphoribosylglycinamide formyltransferase (215 aa).

(6R)-10-formyltetrahydrofolate contacts are provided by residues arginine 74, 99 to 102, and asparagine 116; that span reads MRIL. Histidine 118 serves as the catalytic Proton donor.

It belongs to the GART family.

The catalysed reaction is N(1)-(5-phospho-beta-D-ribosyl)glycinamide + (6R)-10-formyltetrahydrofolate = N(2)-formyl-N(1)-(5-phospho-beta-D-ribosyl)glycinamide + (6S)-5,6,7,8-tetrahydrofolate + H(+). It functions in the pathway purine metabolism; IMP biosynthesis via de novo pathway; N(2)-formyl-N(1)-(5-phospho-D-ribosyl)glycinamide from N(1)-(5-phospho-D-ribosyl)glycinamide (10-formyl THF route): step 1/1. Functionally, catalyzes the transfer of a formyl group from 10-formyltetrahydrofolate to 5-phospho-ribosyl-glycinamide (GAR), producing 5-phospho-ribosyl-N-formylglycinamide (FGAR) and tetrahydrofolate. This Mycobacterium tuberculosis (strain CDC 1551 / Oshkosh) protein is Phosphoribosylglycinamide formyltransferase.